We begin with the raw amino-acid sequence, 194 residues long: Large ribosomal subunit protein eL15 (194 aa).

Residues 162–194 are disordered; it reads LTSAGRKSRGLRNKGKGAEKVRPSVRANKGKTK. Basic residues predominate over residues 167-176; that stretch reads RKSRGLRNKG.

Belongs to the eukaryotic ribosomal protein eL15 family.

The protein is Large ribosomal subunit protein eL15 of Thermococcus onnurineus (strain NA1).